Reading from the N-terminus, the 82-residue chain is Small ribosomal subunit protein bS16 (82 aa).

The protein belongs to the bacterial ribosomal protein bS16 family.

The protein is Small ribosomal subunit protein bS16 of Shewanella sp. (strain ANA-3).